The sequence spans 315 residues: ATP synthase gamma chain (315 aa).

The protein belongs to the ATPase gamma chain family. As to quaternary structure, F-type ATPases have 2 components, CF(1) - the catalytic core - and CF(0) - the membrane proton channel. CF(1) has five subunits: alpha(3), beta(3), gamma(1), delta(1), epsilon(1). CF(0) has three main subunits: a, b and c.

Its subcellular location is the cellular thylakoid membrane. Produces ATP from ADP in the presence of a proton gradient across the membrane. The gamma chain is believed to be important in regulating ATPase activity and the flow of protons through the CF(0) complex. In Cyanothece sp. (strain PCC 7425 / ATCC 29141), this protein is ATP synthase gamma chain.